The following is a 1366-amino-acid chain: DNA-directed RNA polymerase subunit beta' (1366 aa).

Residues 1–23 are compositionally biased toward basic residues; the sequence is MTSSKPKKSSRVRKTSKNSKKNN. The disordered stretch occupies residues 1–25; that stretch reads MTSSKPKKSSRVRKTSKNSKKNNKI. Zn(2+) is bound by residues Cys-248, Cys-315, Cys-322, and Cys-325. The disordered stretch occupies residues 1290–1366; sequence DYTVDMPQSP…LQEEGLLSDE (77 aa). Polar residues predominate over residues 1295-1305; that stretch reads MPQSPTVSSTA. Residues 1354–1366 show a composition bias toward low complexity; sequence LEGLQEEGLLSDE.

Belongs to the RNA polymerase beta' chain family. RpoC2 subfamily. In cyanobacteria the RNAP catalytic core is composed of 2 alpha, 1 beta, 1 beta', 1 gamma and 1 omega subunit. When a sigma factor is associated with the core the holoenzyme is formed, which can initiate transcription. The cofactor is Zn(2+).

It catalyses the reaction RNA(n) + a ribonucleoside 5'-triphosphate = RNA(n+1) + diphosphate. DNA-dependent RNA polymerase catalyzes the transcription of DNA into RNA using the four ribonucleoside triphosphates as substrates. In Prochlorococcus marinus (strain MIT 9515), this protein is DNA-directed RNA polymerase subunit beta'.